Consider the following 606-residue polypeptide: Ribonucleoprotein PTB-binding 1 (606 aa).

Positions 1–41 (MAADVSVTHRPPLSPKSGAEVEAGDAAERRAPEEELPPLDP) are disordered. An N-acetylalanine modification is found at A2. Phosphoserine occurs at positions 6 and 14. The Nuclear localization signal signature appears at 45-60 (RKRLEHTERQFRNRRK). RRM domains lie at 59–130 (RKIL…LQPT), 132–210 (ALLC…WTDA), and 221–299 (RCLC…FCAP). The interaction with PTBP1 stretch occupies residues 307–395 (LAALIAAQAT…QTQGQKKPGI (89 aa)). Residues 391–474 (KKPGILGDSP…PPAPVGLRGS (84 aa)) are disordered. Over residues 453 to 462 (LGLGPPAAQL) the composition is skewed to low complexity. T463 is modified (phosphothreonine). The residue at position 474 (S474) is a Phosphoserine. At P488 the chain carries Phosphothreonine. The disordered stretch occupies residues 519–564 (GLLGLSPGPNGHSHLLKVRAGGGDMQGWEAPAPQRPLTRPALPSVS). Phosphoserine is present on residues S562 and H567. The tract at residues 579 to 606 (CPRPSPAQKAAMWASTPRASAATTRTPT) is disordered. Residues 592–606 (ASTPRASAATTRTPT) show a composition bias toward low complexity.

As to quaternary structure, interacts with PTBP1, RAVER2, VCL and ACTN1. Part of a complex containing RAVER1, VCL and ACTN1.

The protein localises to the nucleus. Its subcellular location is the cytoplasm. In terms of biological role, cooperates with PTBP1 to modulate regulated alternative splicing events. Promotes exon skipping. Cooperates with PTBP1 to modulate switching between mutually exclusive exons during maturation of the TPM1 pre-mRNA. The sequence is that of Ribonucleoprotein PTB-binding 1 (RAVER1) from Homo sapiens (Human).